The following is a 1051-amino-acid chain: MESHSSLSSSSSSSPPSSLSSESCCVKVAVNVRPLIGDEVTQGCRECVSVSPVTPQVQMGTHPFTFDHVYGSNGSPSSLMFEECVAPLVDGLFHGYNATVLAYGQTGSGKTYTMGTGIKDGTKNGLIPQVMSALFNKIDSVKHQMGFQLHVSFIEILKEEVLDLLDSSVPFNRLANGTPGKVVLSKSPVQIRESPNGVITLSGATEVPIATKEEMASCLEQGSLTRATGSTNMNNESSRSHAIFTITLEQMRKISSISVVKDTVDEDMGEEYCCAKLHLVDLAGSERAKRTGSGGVRLKEGIHINRGLLALGNVISALGDEKRRKEGAHVPYRDSKLTRLLQDSLGGNSKTVMIACISPADINAEETLNTLKYANRARNIQNKPVANKDLICSEMQKMRQELQYLQATLCARGATSSEEVQVMREKIMKLESANEELSRELHIYRSKRVTLDYCNIDAQEDGVIFSKDDGLKRGFESMDSDYEMSEATSGGISEDIGAAEEWEHALRQNSMGKELNELSKRLEEKESEMRVCGIGTETIRQHFEKKMMELEKEKRTVQDERDMLLAEVEELAASSDRQAQVARDNHAHKLKALETQILNLKKKQENQVEVLKQKQKSEDAAKRLKTEIQCIKAQKVQLQQKMKQEAEQFRQWKASQEKELLQLKKEGRKTEHERLKLEALNRRQKMVLQRKTEEAAMATKRLKELLEARKSSPHDISVIANGQPPSRQTNEKSLRKWLDNELEVMAKVHQVRFQYEKQIQVRAALAVELTSLRQEMEFPSNSHQEKNGQFRFLSPNTRLERIASLESMLDVSSNALTAMGSQLSEAEEREHSLHAKPRWNHIQSMTDAKYLLQYVFDSTAEARSKIWEKDRDIKEKKEQLNDLLCLLQLTEVQNREILKEKKTREQTVSIALASTSSSYSGSSRSSSKHYGDNNASDDPSSPSSTYHRATKHLKYTGPGIVNISVRESEALLEETRKMKAMKKMGQSGKLWKWKRSHHQWLLQFKWKWQKPWKLSEWIKQNDETTMHVMSKSHHDDEDDHSWNRHSMFQGA.

The tract at residues 1–21 (MESHSSLSSSSSSSPPSSLSS) is disordered. Positions 25–380 (CVKVAVNVRP…LKYANRARNI (356 aa)) constitute a Kinesin motor domain. 104-111 (GQTGSGKT) contacts ATP. Coiled coils occupy residues 414–448 (ATSS…RSKR) and 540–644 (RQHF…KMKQ). Low complexity predominate over residues 916 to 925 (SSSYSGSSRS). 2 disordered regions span residues 916–946 (SSSY…SSTY) and 1029–1051 (MSKS…FQGA).

Belongs to the TRAFAC class myosin-kinesin ATPase superfamily. Kinesin family. KIN-4 subfamily. As to quaternary structure, homodimer.

Kinesin-like motor protein involved in the control of the oriented deposition of cellulose microfibrils. The protein is Kinesin-like protein KIN-4B of Arabidopsis thaliana (Mouse-ear cress).